We begin with the raw amino-acid sequence, 540 residues long: Glucose-6-phosphate isomerase (540 aa).

The Proton donor role is filled by glutamate 350. Active-site residues include histidine 381 and lysine 503.

This sequence belongs to the GPI family.

It localises to the cytoplasm. The catalysed reaction is alpha-D-glucose 6-phosphate = beta-D-fructose 6-phosphate. Its pathway is carbohydrate biosynthesis; gluconeogenesis. It participates in carbohydrate degradation; glycolysis; D-glyceraldehyde 3-phosphate and glycerone phosphate from D-glucose: step 2/4. Its function is as follows. Catalyzes the reversible isomerization of glucose-6-phosphate to fructose-6-phosphate. This Paraburkholderia phytofirmans (strain DSM 17436 / LMG 22146 / PsJN) (Burkholderia phytofirmans) protein is Glucose-6-phosphate isomerase.